Here is a 2898-residue protein sequence, read N- to C-terminus: Papilin (2898 aa).

An N-terminal signal peptide occupies residues 1–26 (MDLSRRLCSTALVAFIVLASIHDSQS). Positions 43 to 67 (LPESSVTPGGEGNDPDEWTPWSSPS) are disordered. The TSP type-1 1 domain occupies 57-111 (PDEWTPWSSPSDCSRTCGGGVSYQTRECLRRDDRGEAVCSGGSRRYFSCNTQDCP). 3 disulfides stabilise this stretch: Cys69–Cys105, Cys73–Cys110, and Cys84–Cys95. Asn258 and Asn319 each carry an N-linked (GlcNAc...) asparagine glycan. The region spanning 338-397 (DTHTWTHHQFNACSASCGGGSQSRKVTCNNRITLAEVNPSLCDQKSKPVEEQACGTEPCA) is the TSP type-1 2 domain. N-linked (GlcNAc...) asparagine glycosylation occurs at Asn419. TSP type-1 domains are found at residues 461 to 521 (NCPK…TPCE), 522 to 575 (GVDW…KSPK), 576 to 633 (CEAQ…QDCE), and 639 to 694 (CPGE…EACT). Intrachain disulfides connect Cys462/Cys504, Cys473/Cys515, and Cys477/Cys520. N-linked (GlcNAc...) asparagine glycosylation occurs at Asn669. 2 disordered regions span residues 699-1252 (LPLT…CAKS) and 1323-1367 (GEND…PDTK). 2 stretches are compositionally biased toward acidic residues: residues 708–720 (IEDD…EDGI) and 727–738 (LSDDEKSEDVID). The segment covering 768 to 788 (STGTTFEGSGYDSESTTDSGI) has biased composition (polar residues). The span at 801–879 (EASTDLSSST…ASASESTDVS (79 aa)) shows a compositional bias: low complexity. N-linked (GlcNAc...) asparagine glycans are attached at residues Asn889, Asn914, Asn917, Asn950, and Asn1064. The segment covering 890 to 1053 (ASDSTPESST…SDNTDITTDG (164 aa)) has biased composition (low complexity). Residues 1064–1073 (NASTEGSTEG) are compositionally biased toward polar residues. Low complexity-rich tracts occupy residues 1076–1091 (EDTT…TEST) and 1104–1215 (STVE…IWST). Residues 1237–1248 (SKPRKCKPKKST) are compositionally biased toward basic residues. A compositionally biased stretch (low complexity) spans 1330-1351 (PETTTVPPTTTTEETQPETTTE). N-linked (GlcNAc...) asparagine glycosylation is found at Asn1489 and Asn1623. Intrachain disulfides connect Cys1612–Cys1662, Cys1621–Cys1645, Cys1637–Cys1658, Cys1671–Cys1721, Cys1680–Cys1704, Cys1696–Cys1717, Cys1730–Cys1780, Cys1739–Cys1763, Cys1755–Cys1776, Cys1790–Cys1840, Cys1799–Cys1823, Cys1815–Cys1836, Cys1849–Cys1899, Cys1858–Cys1882, and Cys1874–Cys1895. BPTI/Kunitz inhibitor domains lie at 1612–1662 (CGLP…KDTC), 1671–1721 (CLLP…QGTC), 1730–1780 (CEQP…NYNC), 1790–1840 (CALP…EDHC), and 1849–1899 (CEIP…LARC). The N-linked (GlcNAc...) asparagine glycan is linked to Asn1750. Positions 1902-1928 (KPEPTTTTPATRPQPSRQDVCDEEPAP) are disordered. Low complexity predominate over residues 1905-1916 (PTTTTPATRPQP). 3 disulfide bridges follow: Cys1922/Cys1972, Cys1931/Cys1955, and Cys1947/Cys1968. Positions 1922–1972 (CDEEPAPGECSTWVLKWHFDRKIGACRQFYYGNCGGNGNRFETENDCQQRC) constitute a BPTI/Kunitz inhibitor 6 domain. The segment at 1972–2004 (CLSQEPPAPTPPRAPAPTRQPDPAPTVAQCSQP) is disordered. Residues 1977–1995 (PPAPTPPRAPAPTRQPDPA) show a composition bias toward pro residues. Cystine bridges form between Cys2001–Cys2051, Cys2010–Cys2034, Cys2026–Cys2047, Cys2071–Cys2121, Cys2080–Cys2104, Cys2096–Cys2117, Cys2128–Cys2178, Cys2137–Cys2161, Cys2153–Cys2174, Cys2194–Cys2244, Cys2203–Cys2227, Cys2219–Cys2240, Cys2253–Cys2303, Cys2262–Cys2286, Cys2278–Cys2299, Cys2318–Cys2371, Cys2327–Cys2354, and Cys2346–Cys2367. 6 consecutive BPTI/Kunitz inhibitor domains span residues 2001-2051 (CSQP…SARC), 2071-2121 (CFLA…QNEC), 2128-2178 (CALP…LNFC), 2194-2244 (CAEP…ERQC), 2253-2303 (CNEP…QTVC), and 2318-2371 (CLLP…TNQC). An N-linked (GlcNAc...) asparagine glycan is attached at Asn2020. N-linked (GlcNAc...) asparagine glycosylation is present at Asn2083. Asn2205 is a glycosylation site (N-linked (GlcNAc...) asparagine). The WAP domain occupies 2452 to 2498 (DIYKPGECPALSANASGCARECYTDADCRGDNKCCSDGCGQLCVHPA). 3 N-linked (GlcNAc...) asparagine glycosylation sites follow: Asn2465, Asn2552, and Asn2625. 3 consecutive Ig-like C2-type domains span residues 2523–2607 (PKEA…REVA), 2617–2697 (PAYI…RPVS), and 2749–2840 (PTVN…ANVS). An intrachain disulfide couples Cys2543 to Cys2592. 2 disulfide bridges follow: Cys2640–Cys2687 and Cys2775–Cys2824. 2 N-linked (GlcNAc...) asparagine glycosylation sites follow: Asn2784 and Asn2838. A PLAC domain is found at 2847–2886 (VSPECVDNPYFANCKLIVKGRYCSNPYYTQFCCRSCTLAG).

It belongs to the papilin family. Homooligomer; disulfide-linked. N-glycosylated. In terms of processing, sulfated. In terms of tissue distribution, during embryogenesis it first appears in the extracellular matrix during gastrulation and early mesoderm development at sites where basement membranes do not subsequently form. Later, migrating hemocytes prominently produce it together with other ECM components, in basement membranes that underlie epithelia and envelop muscles and emerging organs. At various life stages, it can be synthesized by other cells, such as those of the fat body, and it also occurs in a few, circumscribed regions of relatively amorphous ECM. Isoform E is specifically expressed in ECM of heart and proventriculus. Isoform C is a major component of transitory ECM deposit in the early embryo. Isoform F is a major component of the basement membrane during embryogenesis.

Its subcellular location is the secreted. The protein resides in the extracellular space. It is found in the extracellular matrix. The protein localises to the basement membrane. Essential extracellular matrix (ECM) protein that influences cell rearrangements. May act by modulating metalloproteinases action during organogenesis. Able to non-competitively inhibit procollagen N-proteinase, an ADAMTS metalloproteinase. The chain is Papilin (Ppn) from Drosophila melanogaster (Fruit fly).